The sequence spans 622 residues: Chaperone protein HscA homolog (622 aa).

Belongs to the heat shock protein 70 family.

Chaperone involved in the maturation of iron-sulfur cluster-containing proteins. Has a low intrinsic ATPase activity which is markedly stimulated by HscB. In Azoarcus sp. (strain BH72), this protein is Chaperone protein HscA homolog.